The following is a 129-amino-acid chain: Large ribosomal subunit protein bL19 (129 aa).

Belongs to the bacterial ribosomal protein bL19 family.

In terms of biological role, this protein is located at the 30S-50S ribosomal subunit interface and may play a role in the structure and function of the aminoacyl-tRNA binding site. In Methylobacillus flagellatus (strain ATCC 51484 / DSM 6875 / VKM B-1610 / KT), this protein is Large ribosomal subunit protein bL19.